The sequence spans 283 residues: Elongation factor Ts (283 aa).

Positions 79-82 (TDFV) are involved in Mg(2+) ion dislocation from EF-Tu.

The protein belongs to the EF-Ts family.

It localises to the cytoplasm. Functionally, associates with the EF-Tu.GDP complex and induces the exchange of GDP to GTP. It remains bound to the aminoacyl-tRNA.EF-Tu.GTP complex up to the GTP hydrolysis stage on the ribosome. This chain is Elongation factor Ts, found in Shewanella frigidimarina (strain NCIMB 400).